The chain runs to 949 residues: Glycine dehydrogenase (decarboxylating) (949 aa).

Lys700 bears the N6-(pyridoxal phosphate)lysine mark.

The protein belongs to the GcvP family. As to quaternary structure, the glycine cleavage system is composed of four proteins: P, T, L and H. Requires pyridoxal 5'-phosphate as cofactor.

The catalysed reaction is N(6)-[(R)-lipoyl]-L-lysyl-[glycine-cleavage complex H protein] + glycine + H(+) = N(6)-[(R)-S(8)-aminomethyldihydrolipoyl]-L-lysyl-[glycine-cleavage complex H protein] + CO2. The glycine cleavage system catalyzes the degradation of glycine. The P protein binds the alpha-amino group of glycine through its pyridoxal phosphate cofactor; CO(2) is released and the remaining methylamine moiety is then transferred to the lipoamide cofactor of the H protein. This is Glycine dehydrogenase (decarboxylating) from Christiangramia forsetii (strain DSM 17595 / CGMCC 1.15422 / KT0803) (Gramella forsetii).